The sequence spans 1150 residues: MDESIDDVQETRTIAIPLKDSHEDEVIEINCSELPDGEEVLQILEAEEAKLSYWIEVALEYYRQDRVDLFMMILESAGSRAGLEYEGVKQDQMRALDILAAYWMTQGYREKAKDKKSDFFSKATVLFNTADKIAMYEWSHLTVRAWFYLFERDKSTNKYELADQQFNYVVKTNPKNVLPLIGKAVIAFNKKDYKTAIYYFRKAIRQCRHTIADLRVGIGHCFAKMGMMDKAKTAFERAMEIEPYNVSAMCGLGIILLNTYDHDSLKHAVSLFGRSYNLQTDHPVALIHLANHFFFKKEIERAWTLAWHAATYNDCDSIKAEAFYQMGRCRHAQGQFDGAYKYYYQARQANNGEHTLAHYGLGQMYIHRNEIEEAIKCFDTVHKRLPNNTDTMKILGSLYAHVQLNDPAQTAEARQKGRDVLGKYLAVENDDYEACIDLAQLLEATDPKRSLELYENAIDLLVTNESIQPQPEMLNNVGALYMSMKQYEKAEHHFKRAKERLEEQLNTDEGSLLLERRSAPEKSHLLTIRYNLALCLEHLCRTVEAEQMYKDIVKECPGYIDGYLRLGCITRDRHQVYESSLWLKQGVQFDQASPIVWTLIGNLHFAKNEWMPAQKKFEFILSKIFNNKIPDPYSLVALGNVWFEQLLNPSRKKEDEKKYIDRALQMYQKALKLQPKNMYAANGIGCVLAYKRNWNDARDVFSQVRESTSEFYDVWLNIAHVCMEREQWMAAVQMYSSAMKKFRKENDSTLQHYLAKAYYRANMLNEAKEALECAMLDQLDNTQLKFNYAIVLKKSAKEVLRGHKMTSEQVTAAIDDLKFADKIFQYISKNDDRQSSHTGMRISRTICAEEAKNCKDLLTQAKHKLAAAQTQDEEERRLMEKQEKEKIALQNKMIEEARAKEEAEKQKLEDMKNLRLSFIEMTKDVLRLPEIVEEKRRGGGGRKRRNDDGDEFVNDSSDAGNYDGEEGGEDGERRERRKKDKAAKKASRKKRERRDSGGPDSNRRDEKKRKRKEERDRKLQEKLSAKQSAKIKSRAFLSSSESSDDDKPKPAADSSDDEVDPRPPVDEFDSPTRTDSDSDRETTTKKKKKKAVVDSDEGSVSGSGSGSDNDDKPIIGGSDDDDDDKPAGGNSRDSDGSDAPKKKVIESDSD.

13 TPR repeats span residues 143–176 (VRAWFYLFERDKSTNKYELADQQFNYVVKTNPKN), 177–210 (VLPLIGKAVIAFNKKDYKTAIYYFRKAIRQCRHT), 212–245 (ADLRVGIGHCFAKMGMMDKAKTAFERAMEIEPYN), 247–282 (SAMCGLGIILLNTYDHDSLKHAVSLFGRSYNLQTDH), 320–353 (AEAFYQMGRCRHAQGQFDGAYKYYYQARQANNGE), 355–388 (TLAHYGLGQMYIHRNEIEEAIKCFDTVHKRLPNN), 432–464 (YEACIDLAQLLEATDPKRSLELYENAIDLLVTN), 471–504 (PEMLNNVGALYMSMKQYEKAEHHFKRAKERLEEQ), 594–627 (PIVWTLIGNLHFAKNEWMPAQKKFEFILSKIFNN), 643–677 (FEQLLNPSRKKEDEKKYIDRALQMYQKALKLQPKN), 679–711 (YAANGIGCVLAYKRNWNDARDVFSQVRESTSEF), 712–745 (YDVWLNIAHVCMEREQWMAAVQMYSSAMKKFRKE), and 748–781 (STLQHYLAKAYYRANMLNEAKEALECAMLDQLDN). Coiled coils occupy residues 848–916 (AEEA…NLRL) and 972–1028 (ERRE…AKQS). Residues 935–1150 (KRRGGGGRKR…KKKVIESDSD (216 aa)) are disordered. Positions 975 to 992 (ERRKKDKAAKKASRKKRE) are enriched in basic residues. Basic and acidic residues-rich tracts occupy residues 993 to 1005 (RRDSGGPDSNRRD), 1013 to 1024 (EERDRKLQEKLS), 1060 to 1084 (DPRPPVDEFDSPTRTDSDSDRETTT), and 1132 to 1150 (RDSDGSDAPKKKVIESDSD).

In terms of assembly, component of the PAF1 complex which consists of at least cdc-73, ctr-9, leo-1, pafo-1 and rtfo-1.

The protein localises to the nucleus. Component of the PAF1 complex which is a multifunctional complex involved in transcription initiation via genetic interactions with TATA-binding proteins, elongation and transcription-coupled histone modification. Ctr-9 is required for epidermal microtubule organization during morphogenesis. This Caenorhabditis elegans protein is RNA polymerase-associated protein CTR9.